A 202-amino-acid polypeptide reads, in one-letter code: MAEVSRDSEAAERGPEGSSPEAVPGDATIPRVKLLDAIVDTFLQKLVADRSYERFTTCYKHFHQLNPEVTQRIYDKFVAQLQTSIREEISEIKEEGNLEAVLNSLDKIIEEGRERGEPAWRPSGIPEKDLCSVMAPYFLKQQDTLCHQVRKQEAKNQELADAVLAGRRQVEELQQQVRALQQTWQALHREQRELLSVLRAPE.

Positions 1 to 15 (MAEVSRDSEAAERGP) are enriched in basic and acidic residues. The interval 1–26 (MAEVSRDSEAAERGPEGSSPEAVPGD) is disordered. Residues 153-194 (EAKNQELADAVLAGRRQVEELQQQVRALQQTWQALHREQREL) are a coiled coil.

In terms of assembly, component of the MIS12 complex composed of MIS12, DSN1, NSL1 and PMF1. Interacts with COPS7A. Interacts via its coiled-coil domain with the leucine-zipper domain of NFE2L2. The interaction with NFE2L2 is required for the transcriptional regulation of SSAT.

It is found in the nucleus. The protein resides in the chromosome. Its subcellular location is the centromere. It localises to the kinetochore. In terms of biological role, part of the MIS12 complex which is required for normal chromosome alignment and segregation and for kinetochore formation during mitosis. May act as a cotranscription partner of NFE2L2 involved in regulation of polyamine-induced transcription of SSAT. The protein is Polyamine-modulated factor 1 of Mus musculus (Mouse).